The sequence spans 397 residues: Histidinol-phosphate aminotransferase (397 aa).

Lys-247 is subject to N6-(pyridoxal phosphate)lysine.

The protein belongs to the class-II pyridoxal-phosphate-dependent aminotransferase family. Histidinol-phosphate aminotransferase subfamily. Homodimer. It depends on pyridoxal 5'-phosphate as a cofactor.

It catalyses the reaction L-histidinol phosphate + 2-oxoglutarate = 3-(imidazol-4-yl)-2-oxopropyl phosphate + L-glutamate. It functions in the pathway amino-acid biosynthesis; L-histidine biosynthesis; L-histidine from 5-phospho-alpha-D-ribose 1-diphosphate: step 7/9. The chain is Histidinol-phosphate aminotransferase from Frankia casuarinae (strain DSM 45818 / CECT 9043 / HFP020203 / CcI3).